The primary structure comprises 151 residues: Macrodomain Ter protein (151 aa).

Belongs to the MatP family. In terms of assembly, homodimer.

It is found in the cytoplasm. Functionally, required for spatial organization of the terminus region of the chromosome (Ter macrodomain) during the cell cycle. Prevents early segregation of duplicated Ter macrodomains during cell division. Binds specifically to matS, which is a 13 bp signature motif repeated within the Ter macrodomain. The protein is Macrodomain Ter protein of Yersinia enterocolitica serotype O:8 / biotype 1B (strain NCTC 13174 / 8081).